A 401-amino-acid chain; its full sequence is Argininosuccinate synthase (401 aa).

Residue 8–16 (AYSGGLDTS) coordinates ATP. Y85 provides a ligand contact to L-citrulline. G115 contacts ATP. Residues T117, N121, and D122 each contribute to the L-aspartate site. N121 is a binding site for L-citrulline. L-citrulline contacts are provided by R125, S173, E258, and Y270.

Belongs to the argininosuccinate synthase family. Type 1 subfamily. As to quaternary structure, homotetramer.

It localises to the cytoplasm. The catalysed reaction is L-citrulline + L-aspartate + ATP = 2-(N(omega)-L-arginino)succinate + AMP + diphosphate + H(+). Its pathway is amino-acid biosynthesis; L-arginine biosynthesis; L-arginine from L-ornithine and carbamoyl phosphate: step 2/3. The protein is Argininosuccinate synthase of Staphylococcus epidermidis (strain ATCC 35984 / DSM 28319 / BCRC 17069 / CCUG 31568 / BM 3577 / RP62A).